We begin with the raw amino-acid sequence, 243 residues long: Protein Thf1 (243 aa).

Residues 180–224 (SKARVEKDLNLYKSNLEKMAQAVELTEQILESERRKREQNESAKL) are a coiled coil. Basic and acidic residues predominate over residues 210–220 (ESERRKREQNE). Residues 210 to 243 (ESERRKREQNESAKLNTGSSEQMSQGVEACSNIS) are disordered. Over residues 221–243 (SAKLNTGSSEQMSQGVEACSNIS) the composition is skewed to polar residues.

It belongs to the THF1 family.

May be involved in photosynthetic membrane biogenesis. The protein is Protein Thf1 of Prochlorococcus marinus (strain MIT 9313).